The following is a 319-amino-acid chain: tRNA-cytidine(32) 2-sulfurtransferase (319 aa).

A PP-loop motif motif is present at residues serine 43–serine 48. Positions 118, 121, and 209 each coordinate [4Fe-4S] cluster. The disordered stretch occupies residues aspartate 272–isoleucine 297. A compositionally biased stretch (basic and acidic residues) spans aspartate 276–aspartate 286.

This sequence belongs to the TtcA family. As to quaternary structure, homodimer. Mg(2+) is required as a cofactor. It depends on [4Fe-4S] cluster as a cofactor.

It localises to the cytoplasm. The enzyme catalyses cytidine(32) in tRNA + S-sulfanyl-L-cysteinyl-[cysteine desulfurase] + AH2 + ATP = 2-thiocytidine(32) in tRNA + L-cysteinyl-[cysteine desulfurase] + A + AMP + diphosphate + H(+). Its pathway is tRNA modification. Catalyzes the ATP-dependent 2-thiolation of cytidine in position 32 of tRNA, to form 2-thiocytidine (s(2)C32). The sulfur atoms are provided by the cysteine/cysteine desulfurase (IscS) system. The sequence is that of tRNA-cytidine(32) 2-sulfurtransferase from Neisseria gonorrhoeae (strain ATCC 700825 / FA 1090).